Reading from the N-terminus, the 268-residue chain is MAVNVYSTSVTSDNLSRHDMLAWINESLQLNLTKIEQLCSGAAYCQFMDMLFPGSIALKKVKFQAKLEHEYIQNFKILQAGFKRMGVDKIIPVDKLVKGKFQDNFEFVQWFKKFFDANYDGKDYDPVAARQGQETAVAPSLVAPALNKPKKPLTSSSAAPQRPISTQRTAAAPKAGPGVVRKNPGVGNGDDEAAELMQQVNVLKLTVEDLEKERDFYFGKLRNIELICQENEGENDPVLQRIVDILYATDEGFVIPDEGGPQEEQEEY.

N-acetylalanine is present on alanine 2. The Calponin-homology (CH) domain occupies 14 to 116 (NLSRHDMLAW…FVQWFKKFFD (103 aa)). Residue lysine 66 is modified to N6-crotonyllysine. Phosphotyrosine is present on tyrosine 124. Positions 124-268 (YDPVAARQGQ…GGPQEEQEEY (145 aa)) are interaction with MTUS2/TIP150. Positions 146–187 (LNKPKKPLTSSSAAPQRPISTQRTAAAPKAGPGVVRKNPGVG) are disordered. A compositionally biased stretch (polar residues) spans 153–169 (LTSSSAAPQRPISTQRT). Residues serine 155 and serine 165 each carry the phosphoserine modification. An EB1 C-terminal domain is found at 185-255 (GVGNGDDEAA…LYATDEGFVI (71 aa)). Residues 185-268 (GVGNGDDEAA…GGPQEEQEEY (84 aa)) form an interaction with CDK5RAP2 region. An interaction with APC region spans residues 206 to 211 (TVEDLE). Residues 208–268 (EDLEKERDFY…GGPQEEQEEY (61 aa)) form a DCTN1-binding region. The residue at position 220 (lysine 220) is an N6-acetyllysine. The tract at residues 220–242 (KLRNIELICQENEGENDPVLQRI) is APC-binding. Residues 232-255 (EGENDPVLQRIVDILYATDEGFVI) form an interaction with SKA1 region.

It belongs to the MAPRE family. As to quaternary structure, homodimer. Heterodimer with MAPRE3. Interacts with DCTN1, DCTN2, TERF1 and dynein intermediate chain. Interaction with DIAPH1 and DIAPH2. Interacts (via C-terminal residues 206-211) with APC (via C-terminal residues 2674-2843); the interaction inhibits association with and bundling of F-actin. Interacts with CLASP2, DST, KIF2C and STIM1; probably required for their targeting to the growing microtubule plus ends. Interacts with MTUS2; interaction is direct and probably targets MTUS2 to microtubules. Interacts (via C-terminus) with SKA1 (via SXIP motif); the interaction is direct and stabilizes the kinetochore-microtubule attachment of the SKA1 complex. Interacts with APC2. Interacts with CLASP1. Interacts with CDK5RAP2. Interacts with MACF1. Interacts with RABL2/RABL2A; binds preferentially to GTP-bound RABL2. Interacts with KCNAB2. Interacts (via C-terminus) with CLIP1. Interacts with SLAIN2 and SLAIN1. Interacts with KIF18B; this interaction is required for efficient accumulation of KIF18B at microtubule plus ends. Interacts with MISP. Interacts with KNSTRN. Interacts with NCKAP5L. Interacts with CAMSAP2. Interacts with PDE4DIP isoform 13/MMG8/SMYLE; this interaction is required for its recruitment to the Golgi apparatus. Forms a pericentrosomal complex with AKAP9, CDK5RAP2 and PDE4DIP isoform 13/MMG8/SMYLE; within this complex, MAPRE1 binding to CDK5RAP2 may be mediated by PDE4DIP. Interacts with AKNA. Interacts with GAS2L1, GAS2L2, and GAS2L3. Interacts with RARRES1 and AGBL2. Acetylation at Lys-220 by KAT2B/PCAF promotes dynamic kinetochore-microtubule interactions in early mitosis. Post-translationally, crotonylated by KAT5 during mitosis, promoting astral microtubule plasticity and dynamic connection between astral microtubules and the cortex during mitotic chromosome segregation, thereby ensuring accurate spindle positioning in mitosis. Decrotonylated by HDAC3. Ubiquitously expressed.

The protein localises to the cytoplasm. It is found in the cytoskeleton. The protein resides in the microtubule organizing center. Its subcellular location is the centrosome. It localises to the golgi apparatus. The protein localises to the spindle. It is found in the spindle pole. Its function is as follows. Plus-end tracking protein (+TIP) that binds to the plus-end of microtubules and regulates the dynamics of the microtubule cytoskeleton. Recruits other +TIP proteins to microtubules by binding to a conserved Ser-X-Leu-Pro (SXLP) motif in their polypeptide chains. Promotes cytoplasmic microtubule nucleation and elongation. Involved in mitotic spindle positioning by stabilizing microtubules and promoting dynamic connection between astral microtubules and the cortex during mitotic chromosome segregation. Assists chromosome alignment in metaphase by recruiting the SKA complex to the spindle and stabilizing its interactions with microtubule bundles (K-fibers). Also acts as a regulator of minus-end microtubule organization: interacts with the complex formed by AKAP9 and PDE4DIP, leading to recruit CAMSAP2 to the Golgi apparatus, thereby tethering non-centrosomal minus-end microtubules to the Golgi, an important step for polarized cell movement. Promotes elongation of CAMSAP2-decorated microtubule stretches on the minus-end of microtubules. Acts as a regulator of autophagosome transport via interaction with CAMSAP2. Functions downstream of Rho GTPases and DIAPH1 in stable microtubule formation. May play a role in cell migration. This Homo sapiens (Human) protein is Microtubule-associated protein RP/EB family member 1.